A 1482-amino-acid chain; its full sequence is Cystic fibrosis transmembrane conductance regulator (1482 aa).

The Cytoplasmic segment spans residues 1–77; it reads MQKSPLERAS…KLINALRRCF (77 aa). A helical membrane pass occupies residues 78–98; the sequence is FWRFVFYGILLYLGEVTKAVQ. An ABC transmembrane type-1 1 domain is found at 81–365; that stretch reads FVFYGILLYL…WAVQTWYDSL (285 aa). Residues 99 to 122 lie on the Extracellular side of the membrane; the sequence is PLLLGRIIASYDPDNKVERSIAIY. A helical membrane pass occupies residues 123 to 146; it reads LAIGLCLLFIVRTLLLHPAIFGLH. Residues 147 to 195 are Cytoplasmic-facing; it reads HMGMQMRIAMFSLIYKKTLKLSSRVLDKISIGQLVSLLSNNLNKFDEGL. The chain crosses the membrane as a helical span at residues 196 to 216; the sequence is ALAHFVWIAPLQVTLLMGLIW. Topologically, residues 217-222 are extracellular; that stretch reads DLLQAS. The helical transmembrane segment at 223–243 threads the bilayer; that stretch reads AFCGLAFLIIVALGQAGLGRM. Residues 244–298 lie on the Cytoplasmic side of the membrane; sequence MMKYRDKRAGKINERLVITSEMIENIQSVKAYCWEEAMEKMIENLRQIELRLTRK. Residues 299–319 form a helical membrane-spanning segment; sequence AAYVRYFNSAAFFFSGFFVVF. The Extracellular segment spans residues 320–339; sequence LSVLPYAMLKGIILRKIFTT. A helical transmembrane segment spans residues 340 to 358; it reads ISFCIVLRMAVTRQFPWAV. Residues 359–858 lie on the Cytoplasmic side of the membrane; sequence QTWYDSLGAI…YLRYVTVHKS (500 aa). Residues Trp401, Ser434, 458–465, and Gln493 each bind ATP; that span reads GSTGAGKT. The 224-residue stretch at 423–646 folds into the ABC transporter 1 domain; the sequence is NGDNSLFFSN…RPDFSSELMG (224 aa). A lipid anchor (S-palmitoyl cysteine) is attached at Cys524. A phosphoserine mark is found at Ser549 and Ser660. The interval 654–831 is disordered R region; that stretch reads SAERRNSILT…EEINEEDLKE (178 aa). Ser670 bears the Phosphoserine; by PKA mark. Phosphoserine is present on Ser685. Residue Lys687 forms a Glycyl lysine isopeptide (Lys-Gly) (interchain with G-Cter in ubiquitin) linkage. Ser699 and Ser711 each carry phosphoserine. At Thr716 the chain carries Phosphothreonine. Ser736, Ser767, Ser790, Ser795, and Ser813 each carry phosphoserine. Residues 859 to 879 traverse the membrane as a helical segment; it reads LIFVLIWCLVVFLAEVAVSLV. The 298-residue stretch at 859–1156 folds into the ABC transmembrane type-1 2 domain; the sequence is LIFVLIWCLV…AVNSSIDVDS (298 aa). At 880–919 the chain is on the extracellular side; sequence VLYLLRTSSLQDKGNNTTVNANSSYGVIVTNTSSYYLLYI. 4 N-linked (GlcNAc...) asparagine glycosylation sites follow: Asn894, Asn895, Asn901, and Asn910. A discontinuously helical transmembrane segment spans residues 920–940; that stretch reads YVGIADSLFALAIFRGLPLVH. Residues 941 to 991 lie on the Cytoplasmic side of the membrane; sequence TLIKVSKTLHHKMLRSILQAPMSTFNTLKAGRILNRFSKDIAILDDLLPLT. Residues 992-1012 traverse the membrane as a helical segment; that stretch reads MFDFIQLLLIVIGAVVVVSVL. At 1013–1014 the chain is on the extracellular side; the sequence is QP. The chain crosses the membrane as a helical span at residues 1015–1035; that stretch reads YIFLATVPVIAAFIILRAYFL. Topologically, residues 1036–1096 are cytoplasmic; it reads HTSQQLKQLE…TANWFLYLST (61 aa). Residues 1097 to 1117 traverse the membrane as a helical segment; the sequence is LRWFQMRIEIIFVIFFIAVTF. Residues 1118 to 1131 are Extracellular-facing; sequence VSILTTGEGEGTIG. A helical membrane pass occupies residues 1132–1152; that stretch reads IILTLAMNIMNTLQWAVNSSI. Residues 1153–1482 are Cytoplasmic-facing; it reads DVDSLMRSVS…TEEEVQETRL (330 aa). The region spanning 1212–1445 is the ABC transporter 2 domain; the sequence is MTVKDLTAKY…KSLFRQAISP (234 aa). Residues Tyr1221 and 1246–1253 each bind ATP; that span reads GRTGSGKS. The interval 1388–1482 is interaction with GORASP2; the sequence is RTLKQAFADC…TEEEVQETRL (95 aa). The S-palmitoyl cysteine moiety is linked to residue Cys1397. The segment covering 1454-1463 has biased composition (basic residues); that stretch reads HRNSSRHRSR. The interval 1454–1482 is disordered; sequence HRNSSRHRSRSQIAALKEETEEEVQETRL. Position 1458 is a phosphoserine (Ser1458). The segment covering 1472–1482 has biased composition (acidic residues); that stretch reads ETEEEVQETRL. The short motif at 1480–1482 is the PDZ-binding element; sequence TRL.

Belongs to the ABC transporter superfamily. ABCC family. CFTR transporter (TC 3.A.1.202) subfamily. Monomer; does not require oligomerization for channel activity. May form oligomers in the membrane. Interacts with SLC26A3, SLC26A6 and NHERF1. Interacts with SHANK2. Interacts with MYO6. Interacts (via C-terminus) with GOPC (via PDZ domain); this promotes CFTR internalization and thereby decreases channel activity. Interacts with SLC4A7 through NHERF1. Found in a complex with MYO5B and RAB11A. Interacts with ANO1. Interacts with SLC26A8. Interacts with AHCYL1; the interaction increases CFTR activity. Interacts with CSE1L. The core-glycosylated form interacts with GORASP2 (via PDZ GRASP-type 1 domain) in respone to ER stress. Interacts with MARCHF2; the interaction leads to CFTR ubiqtuitination and degradation. Interacts with ADGRG2. In terms of processing, N-glycosylated. Phosphorylated; cAMP treatment promotes phosphorylation and activates the channel. Dephosphorylation decreases the ATPase activity (in vitro). Phosphorylation at PKA sites activates the channel. Phosphorylation at PKC sites enhances the response to phosphorylation by PKA. Phosphorylated by AMPK; this inhibits channel activity. Post-translationally, ubiquitinated, leading to its degradation in the lysosome. Deubiquitination by USP10 in early endosomes enhances its endocytic recycling to the cell membrane. Ubiquitinated by RNF185 during ER stress. Ubiquitinated by MARCHF2.

It localises to the apical cell membrane. The protein localises to the early endosome membrane. Its subcellular location is the cell membrane. It is found in the recycling endosome membrane. The protein resides in the endoplasmic reticulum membrane. It localises to the nucleus. The enzyme catalyses ATP + H2O + closed Cl(-) channel = ADP + phosphate + open Cl(-) channel.. It carries out the reaction chloride(in) = chloride(out). It catalyses the reaction hydrogencarbonate(in) = hydrogencarbonate(out). The catalysed reaction is ATP + H2O = ADP + phosphate + H(+). In terms of biological role, epithelial ion channel that plays an important role in the regulation of epithelial ion and water transport and fluid homeostasis. Mediates the transport of chloride ions across the cell membrane. Possesses an intrinsic ATPase activity and utilizes ATP to gate its channel; the passive flow of anions through the channel is gated by cycles of ATP binding and hydrolysis by the ATP-binding domains. The ion channel is also permeable to HCO(3)(-); selectivity depends on the extracellular chloride concentration. Exerts its function also by modulating the activity of other ion channels and transporters. Contributes to the regulation of the pH and the ion content of the epithelial fluid layer. Modulates the activity of the epithelial sodium channel (ENaC) complex, in part by regulating the cell surface expression of the ENaC complex. May regulate bicarbonate secretion and salvage in epithelial cells by regulating the transporter SLC4A7. Can inhibit the chloride channel activity of ANO1. Plays a role in the chloride and bicarbonate homeostasis during sperm epididymal maturation and capacitation. This is Cystic fibrosis transmembrane conductance regulator from Loxodonta africana (African elephant).